The primary structure comprises 270 residues: Tryptophan synthase alpha chain (270 aa).

Active-site proton acceptor residues include E57 and D68.

Belongs to the TrpA family. In terms of assembly, tetramer of two alpha and two beta chains.

The enzyme catalyses (1S,2R)-1-C-(indol-3-yl)glycerol 3-phosphate + L-serine = D-glyceraldehyde 3-phosphate + L-tryptophan + H2O. It participates in amino-acid biosynthesis; L-tryptophan biosynthesis; L-tryptophan from chorismate: step 5/5. The alpha subunit is responsible for the aldol cleavage of indoleglycerol phosphate to indole and glyceraldehyde 3-phosphate. The protein is Tryptophan synthase alpha chain of Mycobacterium leprae (strain Br4923).